The primary structure comprises 1059 residues: Transmembrane protease serine 9 (1059 aa).

The Cytoplasmic portion of the chain corresponds to methionine 1–alanine 29. A helical; Signal-anchor for type II membrane protein membrane pass occupies residues serine 30–leucine 50. Over serine 51–glutamate 1059 the chain is Extracellular. The LDL-receptor class A domain maps to arginine 153–glutamate 190. Disulfide bonds link cysteine 154–cysteine 166, cysteine 161–cysteine 180, cysteine 174–cysteine 189, and cysteine 228–cysteine 244. In terms of domain architecture, Peptidase S1 1 spans isoleucine 203–threonine 436. Residues histidine 243 and aspartate 292 each act as charge relay system in the active site. Cystine bridges form between cysteine 326–cysteine 393, cysteine 358–cysteine 372, and cysteine 383–cysteine 412. Catalysis depends on serine 387, which acts as the Charge relay system. The interval alanine 443–proline 469 is disordered. The region spanning valine 504–serine 736 is the Peptidase S1 2 domain. A disulfide bridge connects residues cysteine 529 and cysteine 545. Histidine 544 acts as the Charge relay system in catalysis. Residue asparagine 547 is glycosylated (N-linked (GlcNAc...) asparagine). The active-site Charge relay system is the aspartate 592. Intrachain disulfides connect cysteine 626/cysteine 693, cysteine 658/cysteine 672, and cysteine 683/cysteine 712. N-linked (GlcNAc...) asparagine glycans are attached at residues asparagine 638 and asparagine 663. The active-site Charge relay system is the serine 687. Residues threonine 758–leucine 814 form a disordered region. Residues valine 780 to glycine 798 show a composition bias toward polar residues. N-linked (GlcNAc...) asparagine glycosylation is present at asparagine 786. The Peptidase S1 3 domain maps to isoleucine 827–glutamine 1058. Disulfide bonds link cysteine 853-cysteine 869, cysteine 949-cysteine 1015, cysteine 980-cysteine 994, and cysteine 1005-cysteine 1034.

The protein belongs to the peptidase S1 family. Proteolytically cleaved to generate 3 independent serine protease chains. The cleaved chains may remain attached to the membrane thanks to disulfide bonds. It is unclear whether cleavage always takes place. In terms of tissue distribution, expressed in fetal human tissues, such as kidney, liver, lung and brain, and in a variety of tumor cell lines. Weakly expressed in adult tissues including skeletal muscle, liver, placenta and heart.

It localises to the cell membrane. Its activity is regulated as follows. Inhibited by serine protease inhibitors PMSF and 4-(2-aminoethyl)benzenesulfonyl fluoride, but not by EDTA. In terms of biological role, serase-1 and serase-2 are serine proteases that hydrolyze the peptides N-t-Boc-Gln-Ala-Arg-AMC and N-t-Boc-Gln-Gly-Arg-AMC. In contrast, N-t-Boc-Ala-Phe-Lys-AMC and N-t-Boc-Ala-Pro-Ala-AMC are not significantly hydrolyzed. In Homo sapiens (Human), this protein is Transmembrane protease serine 9 (TMPRSS9).